Reading from the N-terminus, the 352-residue chain is Biotin synthase (352 aa).

Residues 44–262 (NRVQVSTLLS…LAVARILMPQ (219 aa)) enclose the Radical SAM core domain. Residues Cys59, Cys63, and Cys66 each contribute to the [4Fe-4S] cluster site. The [2Fe-2S] cluster site is built by Cys103, Cys134, Cys194, and Arg266.

The protein belongs to the radical SAM superfamily. Biotin synthase family. In terms of assembly, homodimer. [4Fe-4S] cluster serves as cofactor. Requires [2Fe-2S] cluster as cofactor.

The catalysed reaction is (4R,5S)-dethiobiotin + (sulfur carrier)-SH + 2 reduced [2Fe-2S]-[ferredoxin] + 2 S-adenosyl-L-methionine = (sulfur carrier)-H + biotin + 2 5'-deoxyadenosine + 2 L-methionine + 2 oxidized [2Fe-2S]-[ferredoxin]. It functions in the pathway cofactor biosynthesis; biotin biosynthesis; biotin from 7,8-diaminononanoate: step 2/2. Catalyzes the conversion of dethiobiotin (DTB) to biotin by the insertion of a sulfur atom into dethiobiotin via a radical-based mechanism. The sequence is that of Biotin synthase from Pseudomonas syringae pv. tomato (strain ATCC BAA-871 / DC3000).